Consider the following 336-residue polypeptide: F420-dependent glucose-6-phosphate dehydrogenase (336 aa).

Asp39 lines the coenzyme F420-(gamma-Glu)n pocket. The active-site Proton donor is His40. Coenzyme F420-(gamma-Glu)n-binding positions include Thr76 and 107–108; that span reads TG. Glu109 functions as the Proton acceptor in the catalytic mechanism. Coenzyme F420-(gamma-Glu)n-binding positions include Asn112, 177–178, and 180–181; these read GG and VV. Positions 195, 198, 259, and 283 each coordinate substrate.

It belongs to the F420-dependent glucose-6-phosphate dehydrogenase family. As to quaternary structure, homodimer.

The catalysed reaction is oxidized coenzyme F420-(gamma-L-Glu)(n) + D-glucose 6-phosphate + H(+) = 6-phospho-D-glucono-1,5-lactone + reduced coenzyme F420-(gamma-L-Glu)(n). Its function is as follows. Catalyzes the coenzyme F420-dependent oxidation of glucose 6-phosphate (G6P) to 6-phosphogluconolactone. Appears to have a role in resistance to oxidative stress, via its consumption of G6P that serves as a source of reducing power to combat oxidative stress in mycobacteria. The polypeptide is F420-dependent glucose-6-phosphate dehydrogenase (Mycolicibacterium fortuitum (Mycobacterium fortuitum)).